Reading from the N-terminus, the 573-residue chain is PCNA-interacting partner (573 aa).

Residues 463-511 (VSEGAQPSVGKARLETSSENVHVDRSKDDKGPRKSTKRKLAKSKQPGVR) form a disordered region. Basic and acidic residues predominate over residues 474 to 494 (ARLETSSENVHVDRSKDDKGP). The span at 495–504 (RKSTKRKLAK) shows a compositional bias: basic residues.

It belongs to the PARI family. Interacts with RAD51 and PCNA. Interacts with PARP1. Interacts with TASOR. Present in testis (at protein level). Expressed in testis, gastrointestinal tract (jejunum, ileum, and colon) and immune system (thymus and spleen). Weakly expressed in lung, kidney, pituitary gland and muscle.

It is found in the cytoplasm. Its subcellular location is the nucleus. Required to suppress inappropriate homologous recombination, thereby playing a central role DNA repair and in the maintenance of genomic stability. Antagonizes homologous recombination by interfering with the formation of the RAD51-DNA homologous recombination structure. Positively regulate the poly(ADP-ribosyl)ation activity of PARP1; however such function may be indirect. Binds single-strand DNA and poly(A) homopolymers. This chain is PCNA-interacting partner (Parpbp), found in Rattus norvegicus (Rat).